The chain runs to 512 residues: Sucrose transport protein SUC2 (512 aa).

Over 1 to 31 (MVSHPMEKAANGASALETQTGELDQPERLRK) the chain is Cytoplasmic. The helical transmembrane segment at 32-52 (IISVSSIAAGVQFGWALQLSL) threads the bilayer. Residues 53–65 (LTPYVQLLGIPHK) lie on the Extracellular side of the membrane. The chain crosses the membrane as a helical span at residues 66 to 86 (WASLIWLCGPISGMLVQPIVG). Residues 87–100 (YHSDRCTSRFGRRR) lie on the Cytoplasmic side of the membrane. A helical transmembrane segment spans residues 101 to 121 (PFIVAGAGLVTVAVFLIGYAA). The Extracellular segment spans residues 122–138 (DIGHSMGDQLDKPPKTR). The chain crosses the membrane as a helical span at residues 139 to 159 (AIAIFALGFWILDVANNTLQG). Over 160 to 177 (PCRAFLADLSAGNAKKTR) the chain is Cytoplasmic. A helical membrane pass occupies residues 178–198 (TANAFFSFFMAVGNVLGYAAG). Over 199 to 223 (SYRNLYKVVPFTMTESCDLYCANLK) the chain is Extracellular. Residues 224–244 (TCFFLSITLLLIVTFVSLCYV) form a helical membrane-spanning segment. The Cytoplasmic segment spans residues 245–278 (KEKPWTPEPTADGKASNVPFFGEIFGAFKELKRP). Residues 279-299 (MWMLLIVTALNWIAWFPFLLF) form a helical membrane-spanning segment. At 300–332 (DTDWMGREVYGGNSDATATAASKKLYNDGVRAG) the chain is on the extracellular side. Residues 333-353 (ALGLMLNAIVLGFMSLGVEWI) traverse the membrane as a helical segment. Topologically, residues 354-362 (GRKLGGAKR) are cytoplasmic. A helical transmembrane segment spans residues 363–383 (LWGIVNFILAICLAMTVVVTK). The Extracellular portion of the chain corresponds to 384-407 (QAENHRRDHGGAKTGPPGNVTAGA). An N-linked (GlcNAc...) asparagine glycan is attached at Asn402. Residues 408–428 (LTLFAILGIPQAITFSIPFAL) form a helical membrane-spanning segment. Over 429–440 (ASIFSTNSGAGQ) the chain is Cytoplasmic. The helical transmembrane segment at 441–461 (GLSLGVLNLAIVVPQMVISVG) threads the bilayer. At 462-473 (GGPFDELFGGGN) the chain is on the extracellular side. A helical transmembrane segment spans residues 474-494 (IPAFVLGAIAAAVSGVLALTV). The Cytoplasmic segment spans residues 495–512 (LPSPPPDAPAFKATMGFH).

It belongs to the glycoside-pentoside-hexuronide (GPH) cation symporter transporter (TC 2.A.2.4) family. Homodimer. Interacts with SUC3 and SUC4. In terms of tissue distribution, expressed in leaves and, to a lower extent, in roots, flowers and stems. Highly specific to the phloem, exclusively localized in companion cells (at protein level).

Its subcellular location is the cell membrane. It catalyses the reaction sucrose(out) + H(+)(out) = sucrose(in) + H(+)(in). The protein operates within glycan biosynthesis; sucrose metabolism. Its activity is regulated as follows. Inhibited by protonophores (e.g. dinitrophenol and carbonyl cyanide m-chlorophenyl-hydrazone (CCCP)) and SH group inhibitors (e.g. N-ethylmaleimide (NEM) and p-chloromercuriphenyl sulphonic acid (PCMPS)). Functionally, responsible for the transport of sucrose into the cell, with the concomitant uptake of protons (symport system). Can also transport other glucosides such as maltose, arbutin (hydroquinone-beta-D-glucoside), salicin (2-(hydroxymethyl)phenyl-beta-D-glucoside), alpha-phenylglucoside, beta-phenylglucoside, alpha-paranitrophenylglucoside, beta-paranitrophenylglucoside, and paranitrophenyl-beta-thioglucoside. May also transport biotin. Required for apoplastic phloem sucrose loading in source tissues (e.g. leaves) in order to transport it to sink tissues (e.g. roots, flowers). The protein is Sucrose transport protein SUC2 of Arabidopsis thaliana (Mouse-ear cress).